The following is a 481-amino-acid chain: Tryptophan--tRNA ligase, cytoplasmic (481 aa).

Positions 12–68 (SPLELFNSIATQGELVRSLKAGNAPKDEIDSAVKMLLSLKMSYKAAMGEEYKAGCPP) constitute a WHEP-TRS domain. K158 carries the post-translational modification N6-succinyllysine. The 'HIGH' region signature appears at 168–177 (PSSEAMHLGH). The 'KMSKS' region motif lies at 353–357 (KMSAS). S355 bears the Phosphoserine mark.

It belongs to the class-I aminoacyl-tRNA synthetase family. As to quaternary structure, homodimer. Interacts with oxidized form of GAPDH. Proteolytic cleavage generates 2 forms; T1-TrpRS and T2-TrpRS. In terms of tissue distribution, isoform 2 is widely expressed, isoform 1 is found only in embryonic stem cells.

Its subcellular location is the cytoplasm. It catalyses the reaction tRNA(Trp) + L-tryptophan + ATP = L-tryptophyl-tRNA(Trp) + AMP + diphosphate + H(+). Functionally, catalyzes the attachment of tryptophan to tRNA(Trp) in a two-step reaction: tryptophan is first activated by ATP to form Trp-AMP and then transferred to the acceptor end of the tRNA(Trp). Could also possess an angiostatic activity. The protein is Tryptophan--tRNA ligase, cytoplasmic of Mus musculus (Mouse).